We begin with the raw amino-acid sequence, 217 residues long: Adenylate kinase (217 aa).

10-15 (GAGKGT) contacts ATP. An NMP region spans residues 30–59 (STGDMLRAQIKAGTELGMKAKAIMDAGGLV). AMP contacts are provided by residues Thr31, Arg36, 57–59 (GLV), 85–88 (GFPR), and Gln92. Positions 122–159 (GRRVHVASGRTYHVVFNPPKVAGKDDVTGEDLIQRDDD) are LID. ATP-binding positions include Arg123 and 132–133 (TY). Arg156 and Arg167 together coordinate AMP. Position 203 (Gly203) interacts with ATP.

This sequence belongs to the adenylate kinase family. In terms of assembly, monomer.

The protein localises to the cytoplasm. The enzyme catalyses AMP + ATP = 2 ADP. Its pathway is purine metabolism; AMP biosynthesis via salvage pathway; AMP from ADP: step 1/1. Functionally, catalyzes the reversible transfer of the terminal phosphate group between ATP and AMP. Plays an important role in cellular energy homeostasis and in adenine nucleotide metabolism. This Thiobacillus denitrificans (strain ATCC 25259 / T1) protein is Adenylate kinase.